A 238-amino-acid polypeptide reads, in one-letter code: Tyrosine recombinase XerD-like (238 aa).

The 75-residue stretch at 1–75 (MKLPNEIDEY…SANQYLLFLY (75 aa)) folds into the Core-binding (CB) domain. Positions 90–238 (VQKKSQTAQS…TITTLEKYYR (149 aa)) constitute a Tyr recombinase domain. Active-site residues include Lys-154 and Arg-204. Tyr-236 functions as the O-(3'-phospho-DNA)-tyrosine intermediate in the catalytic mechanism.

Belongs to the 'phage' integrase family. XerD-like subfamily.

Its subcellular location is the cytoplasm. Its function is as follows. Putative tyrosine recombinase. Not involved in the cutting and rejoining of the recombining DNA molecules on dif(SL) site. The polypeptide is Tyrosine recombinase XerD-like (ynbA) (Lactococcus lactis subsp. lactis (strain IL1403) (Streptococcus lactis)).